Reading from the N-terminus, the 493-residue chain is Transmembrane protein 184 homolog DDB_G0284525 (493 aa).

A compositionally biased stretch (polar residues) spans 1–10 (MTQESSSSNH). Residues 1-25 (MTQESSSSNHYVDESSFDNNNNNNN) are disordered. 7 helical membrane-spanning segments follow: residues 46–66 (VPAL…ATIL), 87–107 (IVRI…SLLL), 119–139 (DCYE…YGGG), 180–200 (YVLV…FGLY), 212–232 (FYNA…VVLF), 254–274 (IVVF…NFGW), and 293–313 (FLIC…FPYE). N-linked (GlcNAc...) asparagine glycosylation is found at N415 and N416.

This sequence belongs to the TMEM184 family.

The protein localises to the cell membrane. Functionally, probable transporter. The sequence is that of Transmembrane protein 184 homolog DDB_G0284525 (tmem184A) from Dictyostelium discoideum (Social amoeba).